The following is a 776-amino-acid chain: Probable exo-1,4-beta-xylosidase bxlB (776 aa).

The signal sequence occupies residues 1-23; the sequence is MVHLSPLLRPLAAFSFFTSLAST. N-linked (GlcNAc...) asparagine glycans are attached at residues Asn-65 and Asn-105. Asp-291 is a catalytic residue. 6 N-linked (GlcNAc...) asparagine glycosylation sites follow: Asn-343, Asn-410, Asn-421, Asn-462, Asn-623, and Asn-766.

Belongs to the glycosyl hydrolase 3 family.

The protein localises to the secreted. It catalyses the reaction Hydrolysis of (1-&gt;4)-beta-D-xylans, to remove successive D-xylose residues from the non-reducing termini.. The protein operates within glycan degradation; xylan degradation. Xylan 1,4-beta-xylosidase involved in the hydrolysis of xylan, a major structural heterogeneous polysaccharide found in plant biomass representing the second most abundant polysaccharide in the biosphere, after cellulose. In Aspergillus flavus (strain ATCC 200026 / FGSC A1120 / IAM 13836 / NRRL 3357 / JCM 12722 / SRRC 167), this protein is Probable exo-1,4-beta-xylosidase bxlB (bxlB).